The following is a 114-amino-acid chain: Dolichyl-diphosphooligosaccharide--protein glycosyltransferase subunit DAD1 (114 aa).

Over 1–30 the chain is Cytoplasmic; that stretch reads MPKAAGDAKLLIQSLNKAYAATPTNLKIID. A helical membrane pass occupies residues 31–51; the sequence is LYVVFAVVTALLQVVYMGIVG. A topological domain (lumenal) is located at residue Ser-52. A helical transmembrane segment spans residues 53 to 73; it reads FPFNSFLSGVLSCIGTAVLAV. Residues 74 to 93 are Cytoplasmic-facing; that stretch reads CHRIQVNKDNKEFKDLAPER. A helical transmembrane segment spans residues 94–114; the sequence is AFADFVLCSLVLHLVIMNFLG.

It belongs to the DAD/OST2 family. Component of the oligosaccharyltransferase (OST) complex.

Its subcellular location is the endoplasmic reticulum membrane. It participates in protein modification; protein glycosylation. Its function is as follows. Subunit of the oligosaccharyl transferase (OST) complex that catalyzes the initial transfer of a defined glycan (Glc(3)Man(9)GlcNAc(2) in eukaryotes) from the lipid carrier dolichol-pyrophosphate to an asparagine residue within an Asn-X-Ser/Thr consensus motif in nascent polypeptide chains, the first step in protein N-glycosylation. N-glycosylation occurs cotranslationally and the complex associates with the Sec61 complex at the channel-forming translocon complex that mediates protein translocation across the endoplasmic reticulum (ER). All subunits are required for a maximal enzyme activity. In Hordeum vulgare (Barley), this protein is Dolichyl-diphosphooligosaccharide--protein glycosyltransferase subunit DAD1 (DAD1).